The following is a 435-amino-acid chain: Glutamyl-tRNA reductase (435 aa).

Substrate-binding positions include 50 to 53 (TCNR), Ser110, 115 to 117 (ETQ), and Gln121. The Nucleophile role is filled by Cys51. 189–194 (GAGEMS) contacts NADP(+).

It belongs to the glutamyl-tRNA reductase family. As to quaternary structure, homodimer.

The enzyme catalyses (S)-4-amino-5-oxopentanoate + tRNA(Glu) + NADP(+) = L-glutamyl-tRNA(Glu) + NADPH + H(+). It functions in the pathway porphyrin-containing compound metabolism; protoporphyrin-IX biosynthesis; 5-aminolevulinate from L-glutamyl-tRNA(Glu): step 1/2. Catalyzes the NADPH-dependent reduction of glutamyl-tRNA(Glu) to glutamate 1-semialdehyde (GSA). This Campylobacter lari (strain RM2100 / D67 / ATCC BAA-1060) protein is Glutamyl-tRNA reductase.